The following is a 536-amino-acid chain: Membrane protein insertase YidC (536 aa).

The chain crosses the membrane as a helical span at residues 14–34 (ILIATAISLLFFIPYSYFFAP). A disordered region spans residues 43–69 (STSMERAEQQAAPQTSSSPKEGQVSSV). The segment covering 53–68 (AAPQTSSSPKEGQVSS) has biased composition (polar residues). The next 5 membrane-spanning stretches (helical) occupy residues 312-332 (VVEYGFITFFAKPLFLLLDWL), 339-359 (WGWAIVLLTLVVRIILFPLTY), 401-421 (GANPMGGCLPLLLQMPIFFAI), 436-456 (WILWINDLSVMDPYFILPILM), and 484-504 (PLIFTFFFVTFPSGLVLYWFV).

It belongs to the OXA1/ALB3/YidC family. Type 1 subfamily. Interacts with the Sec translocase complex via SecD. Specifically interacts with transmembrane segments of nascent integral membrane proteins during membrane integration.

It is found in the cell inner membrane. Its function is as follows. Required for the insertion and/or proper folding and/or complex formation of integral membrane proteins into the membrane. Involved in integration of membrane proteins that insert both dependently and independently of the Sec translocase complex, as well as at least some lipoproteins. Aids folding of multispanning membrane proteins. The polypeptide is Membrane protein insertase YidC (Wolinella succinogenes (strain ATCC 29543 / DSM 1740 / CCUG 13145 / JCM 31913 / LMG 7466 / NCTC 11488 / FDC 602W) (Vibrio succinogenes)).